A 316-amino-acid polypeptide reads, in one-letter code: Porphobilinogen deaminase (316 aa).

Residue C245 is modified to S-(dipyrrolylmethanemethyl)cysteine.

The protein belongs to the HMBS family. In terms of assembly, monomer. Requires dipyrromethane as cofactor.

It catalyses the reaction 4 porphobilinogen + H2O = hydroxymethylbilane + 4 NH4(+). Its pathway is porphyrin-containing compound metabolism; protoporphyrin-IX biosynthesis; coproporphyrinogen-III from 5-aminolevulinate: step 2/4. It participates in porphyrin-containing compound metabolism; chlorophyll biosynthesis. In terms of biological role, tetrapolymerization of the monopyrrole PBG into the hydroxymethylbilane pre-uroporphyrinogen in several discrete steps. The polypeptide is Porphobilinogen deaminase (Prochlorococcus marinus (strain MIT 9312)).